We begin with the raw amino-acid sequence, 374 residues long: MVFSPRLSAFVALVALTNAATAVPMYGQCGGSGYTGPTQCDPGLVCVKLNDWYSQCQSGGAQPPVTTTSSPPVTVSPPPSTTTVAPPVATGPPAPEIPAGQLTQLRSFGNNPSNISMFVYKPQNVKNRPGLLVALHPCGGTAQQYFSGFPGFRQHADQRGFIVLYGQSPPGSSNCWDIISTASLTREGGDDSTGIASAVKYALQNWNVDPEKVFVTGTSSGAMMTNIMAATYPDLFKAGAVWAGTAVGCLSANTPQFPPDPCQSGTVIRTPQEWGDRVRRAYPGYNGPWPRMQIWHGTNDFALDHKNLAEQMKQWTNVHNISQTPTSTSPSTPRQGWTKQVYGNGLVETFSGQGAGHGLPESGTEVVAMDFFGL.

The signal sequence occupies residues 1-22; the sequence is MVFSPRLSAFVALVALTNAATA. The region spanning 23-57 is the CBM1 domain; the sequence is VPMYGQCGGSGYTGPTQCDPGLVCVKLNDWYSQCQ. The ser/Thr/Pro-rich linker stretch occupies residues 58–99; sequence SGGAQPPVTTTSSPPVTVSPPPSTTTVAPPVATGPPAPEIPA. The segment at 60-86 is disordered; that stretch reads GAQPPVTTTSSPPVTVSPPPSTTTVAP. Over residues 63-73 the composition is skewed to low complexity; the sequence is PPVTTTSSPPV. The segment at 100–374 is catalytic; sequence GQLTQLRSFG…EVVAMDFFGL (275 aa). N-linked (GlcNAc...) asparagine glycosylation occurs at Asn114. Ser219 (charge relay system) is an active-site residue. A glycan (N-linked (GlcNAc...) asparagine) is linked at Asn320.

The protein belongs to the carbohydrate esterase 1 (CE1) family. AxeA subfamily. Monomer. Post-translationally, glycosylated.

It is found in the secreted. It catalyses the reaction Deacetylation of xylans and xylo-oligosaccharides.. Its pathway is glycan degradation; xylan degradation. Acetylxylan esterase involved in the hydrolysis of xylan, a major structural heterogeneous polysaccharide found in plant biomass representing the second most abundant polysaccharide in the biosphere, after cellulose. Degrades acetylated xylans by cleaving acetyl side groups from the hetero-xylan backbone. This is Acetylxylan esterase from Coprinopsis cinerea (strain Okayama-7 / 130 / ATCC MYA-4618 / FGSC 9003) (Inky cap fungus).